We begin with the raw amino-acid sequence, 206 residues long: Large ribosomal subunit protein uL4 (206 aa).

A disordered region spans residues 63–85 (MYKQKGTGSARHGSARAPQFRGG).

This sequence belongs to the universal ribosomal protein uL4 family. In terms of assembly, part of the 50S ribosomal subunit.

Its function is as follows. One of the primary rRNA binding proteins, this protein initially binds near the 5'-end of the 23S rRNA. It is important during the early stages of 50S assembly. It makes multiple contacts with different domains of the 23S rRNA in the assembled 50S subunit and ribosome. In terms of biological role, forms part of the polypeptide exit tunnel. This Beijerinckia indica subsp. indica (strain ATCC 9039 / DSM 1715 / NCIMB 8712) protein is Large ribosomal subunit protein uL4.